Consider the following 1252-residue polypeptide: Plasma membrane calcium-transporting ATPase mca-1 (1252 aa).

The Cytoplasmic portion of the chain corresponds to 1 to 121; that stretch reads MQKSQNVTAV…VRLVLDACKD (121 aa). The helical transmembrane segment at 122–142 threads the bilayer; that stretch reads PTLVILVLSGFINLALSFYEP. Over 143 to 180 the chain is Extracellular; the sequence is TSAAEDATQHLVNATTAAILANGTFMSTTEAPSEGHGT. 2 N-linked (GlcNAc...) asparagine glycosylation sites follow: asparagine 155 and asparagine 164. A helical membrane pass occupies residues 181–201; it reads AWIEGVAILLCVIVVVLVTAV. Over 202 to 376 the chain is Cytoplasmic; sequence NDYSKERQFR…KSVLQAKLSK (175 aa). The tract at residues 330 to 361 is disordered; sequence DDSTSTSSSSSSSSSSSGSSSNGSSDSSKSGD. Positions 333–357 are enriched in low complexity; that stretch reads TSTSSSSSSSSSSSGSSSNGSSDSS. A helical membrane pass occupies residues 377-397; sequence LALQIIYCGTTIAIIALIVLV. At 398-422 the chain is on the extracellular side; the sequence is TRFCLDHYVFEKNEFSLVDIQMFVK. A helical membrane pass occupies residues 423-443; that stretch reads FFIIAVTILVISIPEGLPLAI. Residues valine 432, isoleucine 435, and glutamate 437 each coordinate Ca(2+). The Cytoplasmic portion of the chain corresponds to 444–879; it reads ALALTYSVRK…GRNVYDSISK (436 aa). Aspartate 479 serves as the catalytic 4-aspartylphosphate intermediate. 2 residues coordinate Mg(2+): aspartate 479 and threonine 481. Threonine 481, glutamate 553, lysine 612, threonine 733, glycine 734, aspartate 735, arginine 792, and lysine 798 together coordinate ATP. Residue aspartate 822 participates in Mg(2+) binding. ATP is bound at residue asparagine 825. Residues 880–900 traverse the membrane as a helical segment; it reads FLQFQLTVNVVAVITAFVGAV. Asparagine 888 provides a ligand contact to Ca(2+). Topologically, residues 901-908 are extracellular; sequence TVSDSPLK. The helical transmembrane segment at 909–929 threads the bilayer; sequence AVHMLWINLIMDTLASLALAT. Residues asparagine 916 and aspartate 920 each contribute to the Ca(2+) site. The Cytoplasmic portion of the chain corresponds to 930–960; it reads EQPTDELLERKPYGRKKSLISRTMVKNILCH. Residues 961 to 981 form a helical membrane-spanning segment; it reads ALYQLIIIFVIFFYGDTIFGI. At 982 to 989 the chain is on the extracellular side; sequence KTGLYAPL. The helical transmembrane segment at 990–1010 threads the bilayer; the sequence is FAPPSQHFTLVFNAFVMMTVF. The Cytoplasmic portion of the chain corresponds to 1011 to 1035; it reads NEINARKVHGERNVFKGLASNRVFC. A helical transmembrane segment spans residues 1036 to 1056; that stretch reads VIWVTTFIAQIIIVQFGGAWF. Residues 1057 to 1065 lie on the Extracellular side of the membrane; it reads STAPLTLQQ. A helical membrane pass occupies residues 1066-1086; the sequence is WIVCLVLGFSTLIWGQIVATI. At 1087 to 1252 the chain is on the cytoplasmic side; it reads PSKKLPKAWK…NVDMEDIELN (166 aa). Positions 1124–1142 are calmodulin-binding subdomain A; the sequence is LRRSGKSLWVRGMFIIGNH. The tract at residues 1143–1152 is calmodulin-binding subdomain B; sequence LRVLRAFGME. The segment at 1181–1252 is disordered; sequence YRHQKHQEKK…NVDMEDIELN (72 aa).

The protein belongs to the cation transport ATPase (P-type) (TC 3.A.3) family. Type IIB subfamily. In terms of assembly, interacts with calmodulin.

It localises to the cell membrane. The enzyme catalyses Ca(2+)(in) + ATP + H2O = Ca(2+)(out) + ADP + phosphate + H(+). Functionally, catalyzes the hydrolysis of ATP coupled with the transport of calcium across a membrane. This Caenorhabditis elegans protein is Plasma membrane calcium-transporting ATPase mca-1.